The following is a 97-amino-acid chain: Large ribosomal subunit protein uL23 (97 aa).

Belongs to the universal ribosomal protein uL23 family. In terms of assembly, part of the 50S ribosomal subunit. Contacts protein L29, and trigger factor when it is bound to the ribosome.

One of the early assembly proteins it binds 23S rRNA. One of the proteins that surrounds the polypeptide exit tunnel on the outside of the ribosome. Forms the main docking site for trigger factor binding to the ribosome. The polypeptide is Large ribosomal subunit protein uL23 (Mesorhizobium japonicum (strain LMG 29417 / CECT 9101 / MAFF 303099) (Mesorhizobium loti (strain MAFF 303099))).